A 385-amino-acid chain; its full sequence is Glucans biosynthesis protein C (385 aa).

10 helical membrane-spanning segments follow: residues 17–37 (AWLM…SHTW), 60–80 (MQVF…RYPL), 91–111 (VGIP…IMLQ), 137–157 (ISHL…VWIF), 173–193 (KFSM…YAVI), 212–232 (FIVM…LAFI), 239–259 (LFTT…VAYL), 274–294 (TESV…FSFG), 311–331 (ASLF…AYIT), and 338–358 (WLGF…LYEI).

This sequence belongs to the acyltransferase 3 family. OpgC subfamily.

The protein localises to the cell membrane. It participates in glycan metabolism; osmoregulated periplasmic glucan (OPG) biosynthesis. In terms of biological role, necessary for the succinyl substitution of periplasmic glucans. Could catalyze the transfer of succinyl residues from the cytoplasmic side of the membrane to the nascent glucan backbones on the periplasmic side of the membrane. This chain is Glucans biosynthesis protein C, found in Escherichia coli (strain K12 / MC4100 / BW2952).